The primary structure comprises 194 residues: 4'-phosphooxetanocin A phosphatase (194 aa).

Residues R16 and W17 each coordinate 4'-phosphooxetanocin A. Oxetanocin A is bound at residue W17. Positions 31, 66, and 67 each coordinate Mg(2+). The 4'-phosphooxetanocin A site is built by H75, S78, and K81. Oxetanocin A-binding residues include H75 and S78. D132 is a Mg(2+) binding site.

This sequence belongs to the 5DNU family. Homodimer. The cofactor is Mg(2+). Co(2+) serves as cofactor. It depends on Mn(2+) as a cofactor.

It catalyses the reaction 4'-phosphooxetanocin A + H2O = oxetanocin A + phosphate. Phosphohydrolase involved in the biosynthesis of oxetanocin A (OXT-A), a nucleoside analog with antitumor, antiviral and antibacterial properties. Catalyzes the hydrolysis of phosphooxetanocin A (OXT-A-P) to generate oxetanocin A (OXT-A) and a molecule of inorganic phosphate. Can also bind and hydrolyze OXT triphosphate (OXT-A-PPP) and OXT diphosphate (OXT-A-PP), and thus catalyze the sequential hydrolysis of tri-, di- and mono-phosphorylated oxetanocin A compounds, releasing one molecule of inorganic phosphate at a time. In vitro can also use dATP, dAMP and dADP. The sequence is that of 4'-phosphooxetanocin A phosphatase from Priestia megaterium (Bacillus megaterium).